The sequence spans 212 residues: MNNSLIVRQLGLQDYQEIWHKMQDFTDTRNAETQDEIWLVQHYPVFTQGQAGKPEHLLQRSEIPVVQSDRGGQITYHAPGQQVMYVLIDIKRHKNLNVRQLVTALEQTVVKTLAEYGIESYPKPDAPGVYVDGKKICSLGLRIRRGCSFHGLALNINMDLNPFHYINPCGYAGLEMCQLADFVNQDEADCDNVSAKLIKHFADLLGYNITTL.

Residues 31–209 (AETQDEIWLV…HFADLLGYNI (179 aa)) form the BPL/LPL catalytic domain. Substrate contacts are provided by residues 70-77 (RGGQITYH), 138-140 (SLG), and 151-153 (GLA). The Acyl-thioester intermediate role is filled by Cys169.

It belongs to the LipB family.

It localises to the cytoplasm. It carries out the reaction octanoyl-[ACP] + L-lysyl-[protein] = N(6)-octanoyl-L-lysyl-[protein] + holo-[ACP] + H(+). It participates in protein modification; protein lipoylation via endogenous pathway; protein N(6)-(lipoyl)lysine from octanoyl-[acyl-carrier-protein]: step 1/2. Catalyzes the transfer of endogenously produced octanoic acid from octanoyl-acyl-carrier-protein onto the lipoyl domains of lipoate-dependent enzymes. Lipoyl-ACP can also act as a substrate although octanoyl-ACP is likely to be the physiological substrate. This is Octanoyltransferase from Haemophilus influenzae (strain PittEE).